Reading from the N-terminus, the 191-residue chain is Cell division protein SepF (191 aa).

Residues 1-77 (MEGQDDYQLL…MGSNVIGLPG (77 aa)) form a disordered region.

It belongs to the SepF family. Homodimer. Interacts with FtsZ.

It localises to the cytoplasm. In terms of biological role, cell division protein that is part of the divisome complex and is recruited early to the Z-ring. Probably stimulates Z-ring formation, perhaps through the cross-linking of FtsZ protofilaments. Its function overlaps with FtsA. This is Cell division protein SepF from Synechococcus sp. (strain JA-2-3B'a(2-13)) (Cyanobacteria bacterium Yellowstone B-Prime).